A 265-amino-acid chain; its full sequence is uncharacterized protein (265 aa).

A divalent metal cation contacts are provided by His7, His9, Glu95, His131, His156, and Asp206.

Belongs to the metallo-dependent hydrolases superfamily. TatD-type hydrolase family. Requires a divalent metal cation as cofactor.

This is an uncharacterized protein from Buchnera aphidicola subsp. Baizongia pistaciae (strain Bp).